An 848-amino-acid chain; its full sequence is MTLHCVVALFALISSCLATAGPEPGVQCALSPVNASHPVQALMESFTVLSGCASRGTMGRPQEVHVLNLRAADQGPGQRQSEVTLHLNPISSVHIHHKPVVFLLNSPQPLVWHLKTERLAVGVSRLFLVSEGSVVHFSSGNFSLSAETEERNFPHGNEHLLNWARKEYGAVTSFTELKIARNIYIKVGEDQVFPPTCSIGKNFLSLNYLAEYLQPKPAEGCVVSGRPQEKEVHIIELIAPNSNPYSAFQVDIIIDIRPSRKDPELVKNLILILKCKKSVNWVIKSFDVKGNLKVLAPNSIGFGRESERSMIMTKSVRDDIPSTQEKLLRWALDNGYSPVTSYTVAPVANRFHLRLENNEEMRDEEVHTIPPELQILLDPGALPVLDHPPSGEGAARHGGLPFPFPYIPRRGRQDGGKDRLPRPKDPVVPSIQLLPGPREPQEAQGSRDVALSVRCDSEKMLVAVEKDSFQASGYPGLELTLLDPTCKAKTNGTHFILESPLDGCGTRHRRSAPDGVVYYNSIVIQAPPSGDSSGWPDGYEDLESGDNGFPGDVDEGDVALSSRPELVVFNCSLRPARHPSRAQDPPTRNVTFSMDLYTTDLFLAPAQGVFSVAENGHVYVEVSVTKADQELGFAIQTCFISPYSNPDRMSDYTIIENICPKDESVKFYDPKRVHFPIPQAETDKKRFSFVFKPVFNTSLLFLQCELTLCTKREKEPQKLPKCVLPDEACTSLDASMIWAMMQNKKTFTKPLAVIHHEVQFKGPSTKESNPISPPIFHGLDTLTVMGIAFAAFVIGALLTGALWYIYSHTGDSAGRQPVPTSPPASENSSAAHSLGSTQSTPCSSSSAA.

Residues 1–20 form the signal peptide; sequence MTLHCVVALFALISSCLATA. The Extracellular segment spans residues 21–784; sequence GPEPGVQCAL…IFHGLDTLTV (764 aa). Asn34 and Asn141 each carry an N-linked (GlcNAc...) asparagine glycan. Cys52 and Cys197 are oxidised to a cystine. The tract at residues 390-448 is disordered; sequence SGEGAARHGGLPFPFPYIPRRGRQDGGKDRLPRPKDPVVPSIQLLPGPREPQEAQGSRD. A compositionally biased stretch (basic and acidic residues) spans 411-425; it reads GRQDGGKDRLPRPKD. The region spanning 454-729 is the ZP domain; the sequence is RCDSEKMLVA…PKCVLPDEAC (276 aa). A glycan (N-linked (GlcNAc...) asparagine) is linked at Asn491. Ser529, Ser533, and Ser544 each carry an O-linked (Xyl...) (glycosaminoglycan) serine glycan. N-linked (GlcNAc...) asparagine glycosylation is found at Asn570, Asn589, and Asn696. 3 disulfides stabilise this stretch: Cys638–Cys704, Cys659–Cys729, and Cys709–Cys722. An interaction with TGF-beta ligand region spans residues 736-750; it reads MIWAMMQNKKTFTKP. The helical transmembrane segment at 785-806 threads the bilayer; that stretch reads MGIAFAAFVIGALLTGALWYIY. Topologically, residues 807 to 848 are cytoplasmic; sequence SHTGDSAGRQPVPTSPPASENSSAAHSLGSTQSTPCSSSSAA. The tract at residues 813–848 is disordered; it reads AGRQPVPTSPPASENSSAAHSLGSTQSTPCSSSSAA. A compositionally biased stretch (low complexity) spans 833–848; it reads SLGSTQSTPCSSSSAA. Position 837 is a phosphothreonine (Thr837).

Forms homodimers and homooligomers. Interacts with DYNLT4. Interacts with integrin ITGA5:ITGB1; this interaction promotes the internalization and trafficking of ITGA5:ITGB1 into endocytic vesicles. Interacts with TGFB1, BMP2, BMP5, BMP7 or GDF5 and inhibin A via the ligand binding domains. Interacts with ALK3/BMPR1A; this interaction results in the cell surface retention of BMPR1A. Interacts with ALK6/BMPR1B; this interaction enhances BMPR1B-mediated stimulation of the BMP signaling pathway. Interacts with the scaffolding protein beta-arrestin2/ARRB2; this interaction mediates internalization of TGFBR3 and thus regulates migration, actin cytoskeleton and activation of CDC42. In terms of processing, extensively modified by glycosaminoglycan groups (GAG). Phosphorylated in the cytoplasmic domain by the type II receptor TGFBR2 at THR-837 to mediate recruitment of ARRB2 and subsequent internalization of TGFBR2 and TGFBR3.

The protein resides in the cell membrane. It localises to the secreted. It is found in the extracellular space. The protein localises to the extracellular matrix. Cell surface receptor that regulates diverse cellular processes including cell proliferation, differentiation, migration, and apoptosis. Initiates BMP, inhibin, and TGF-beta signaling pathways by interacting with different ligands including TGFB1, BMP2, BMP5, BMP7 or GDF5. Alternatively, acts as a cell surface coreceptor for BMP ligands, serving to enhance ligand binding by differentially regulating BMPR1A/ALK3 and BMPR1B/ALK6 receptor trafficking. Promotes epithelial cell adhesion, focal adhesion formation and integrin signaling during epithelial cell spreading on fibronectin. By interacting with the scaffolding protein beta-arrestin2/ARRB2, regulates migration or actin cytoskeleton and promotes the activation of CDC42 as well as the inhibition of NF-kappa-B. In gonadotrope cells, acts as an inhibin A coreceptor and regulates follicle-stimulating hormone (FSH) levels and female fertility. Plays a role in the inhibition of directed and random cell migration in epithelial cells by altering the actin cytoskeletal organization. Participates in epithelial-mesenchymal transformation (EMT) upon binding to BMP2 or TGFB2, by activating the PAR6/SMURF1/RHOA pathway. The polypeptide is Transforming growth factor beta receptor type 3 (TGFBR3) (Sus scrofa (Pig)).